Consider the following 1802-residue polypeptide: Non-reducing polyketide synthase nscA (1802 aa).

Residues 27 to 261 (DLFRRLDQHS…PLPVYDGLCH (235 aa)) are N-terminal acylcarrier protein transacylase domain (SAT). The Ketosynthase family 3 (KS3) domain maps to 396–829 (SSKLAIVGMA…GGNTTLLLED (434 aa)). Catalysis depends on for beta-ketoacyl synthase activity residues cysteine 569, histidine 704, and histidine 747. The tract at residues 935–1235 (FTGQGAYYHG…SASAIPSCRR (301 aa)) is malonyl-CoA:ACP transacylase (MAT) domain. A product template (PT) domain region spans residues 1322–1641 (TSLVHQITAE…RLLMDRFFSP (320 aa)). The segment at 1326-1462 (HQITAETVEA…ATIRFEDPEA (137 aa)) is N-terminal hotdog fold. In terms of domain architecture, PKS/mFAS DH spans 1326-1636 (HQITAETVEA…FRRVPRLLMD (311 aa)). Catalysis depends on histidine 1358, which acts as the Proton acceptor; for dehydratase activity. Residues 1490–1636 (ASRLSKPLAY…FRRVPRLLMD (147 aa)) are C-terminal hotdog fold. The Proton donor; for dehydratase activity role is filled by aspartate 1547. The disordered stretch occupies residues 1699-1729 (LLATSSKSSTPKESPIVTPAESERAEPVDNS). Residues 1702–1713 (TSSKSSTPKESP) show a composition bias toward low complexity. Positions 1725 to 1802 (PVDNSMTSQC…EMTAWIEEYC (78 aa)) constitute a Carrier domain. An O-(pantetheine 4'-phosphoryl)serine modification is found at serine 1762.

The cofactor is pantetheine 4'-phosphate.

Its pathway is secondary metabolite biosynthesis. Functionally, non-reducing polyketide synthase; part of the gene cluster that mediates the biosynthesis of neosartoricin B, a prenylated anthracenone that probably exhibits T-cell antiproliferative activity, suggestive of a physiological role as an immunosuppressive agent. The non-reducing polyketide synthase nscA probably synthesizes and cyclizes the decaketide backbone. The hydrolase nscB then mediates the product release through hydrolysis followed by spontaneous decarboxylation. The prenyltransferase nscD catalyzes the addition of the dimethylallyl group to the aromatic C5. The FAD-dependent monooxygenase nscC is then responsible for the stereospecific hydroxylation at C2. Neosartoricin B can be converted into two additional compounds neosartoricins C and D. Neosartoricin C is a spirocyclic compound that is cyclized through the attack of C3 hydroxyl on C14, followed by dehydration. On the other hand, neosartoricin D is a further cyclized compound in which attack of C2 on C14 in neosartoricin C results in the formation of the acetal-containing dioxabicyclo-octanone ring. Both of these compounds are novel and possibly represent related metabolites of the gene cluster. This Trichophyton tonsurans (strain CBS 112818) (Scalp ringworm fungus) protein is Non-reducing polyketide synthase nscA.